The primary structure comprises 1548 residues: Multidrug resistance protein (1548 aa).

The Cytoplasmic portion of the chain corresponds to M1–K238. The ABC transmembrane type-1 1 domain maps to V231 to Q514. The chain crosses the membrane as a helical span at residues L239 to V256. The N-linked (GlcNAc...) asparagine glycan is linked to N263. Helical transmembrane passes span W266–A287, V349–I367, V375–S392, A463–G480, and V500–A519. Residues K520–K932 lie on the Cytoplasmic side of the membrane. The region spanning V634–L855 is the ABC transporter 1 domain. G667–S674 serves as a coordination point for ATP. 4 helical membrane passes run S933 to T950, T975 to L993, G1051 to V1070, and V1072 to Y1088. The 282-residue stretch at W940–A1221 folds into the ABC transmembrane type-1 2 domain. N1095 and N1154 each carry an N-linked (GlcNAc...) asparagine glycan. 2 helical membrane passes run L1164–G1182 and G1186–L1205. Residues T1206–D1548 lie on the Cytoplasmic side of the membrane. The ABC transporter 2 domain occupies L1286–E1521. Residue G1320–S1327 participates in ATP binding.

This sequence belongs to the ABC transporter superfamily. ABCB family. Multidrug resistance exporter (TC 3.A.1.201) subfamily.

Its subcellular location is the membrane. The enzyme catalyses ATP + H2O + xenobioticSide 1 = ADP + phosphate + xenobioticSide 2.. This Leishmania tarentolae (Sauroleishmania tarentolae) protein is Multidrug resistance protein (PGPA).